Here is a 307-residue protein sequence, read N- to C-terminus: Zygote arrest protein 2.L (307 aa).

Positions 138–200 are disordered; sequence LPQGGRLPKK…EEPGNEEQTK (63 aa). The span at 156–186 shows a compositional bias: basic and acidic residues; that stretch reads LKERAPSPEDKEREKVSEKEPDTKDELEKRP. The segment at 208 to 293 adopts a 3CxxC-type zinc-finger fold; that stretch reads QKYGYFHCKD…QELCGRCKNK (86 aa).

This sequence belongs to the ZAR1 family. In terms of tissue distribution, expressed in oocytes.

It localises to the cytoplasm. The protein localises to the cytoplasmic ribonucleoprotein granule. Functionally, mRNA-binding protein required for maternal mRNA storage, translation and degradation during oocyte maturation. Probably promotes formation of some phase-separated membraneless compartment that stores maternal mRNAs in oocytes: acts by undergoing liquid-liquid phase separation upon binding to maternal mRNAs. Binds to the 3'-UTR of maternal mRNAs, inhibiting their translation. In Xenopus laevis (African clawed frog), this protein is Zygote arrest protein 2.L (zar2.L).